We begin with the raw amino-acid sequence, 3902 residues long: Mediator of RNA polymerase II transcription subunit 12 (3902 aa).

Disordered stretches follow at residues 414–576 (ESLT…EELP), 619–674 (FEPF…NPKL), 694–940 (AFDP…LEAL), 977–1029 (VVEK…PEPP), 1812–1831 (TSHKTKDVKRKSANKTTETR), 2463–2675 (TVEP…NRKQ), 2719–2771 (AGAS…SSSM), 2876–3151 (RIME…PEMQ), 3195–3549 (LQAG…SSNQ), and 3563–3902 (AGLN…QQQY). Acidic residues predominate over residues 420 to 430 (EPEEDPEEGPE). The span at 709-721 (PTPPEAPPPPPPV) shows a compositional bias: pro residues. Composition is skewed to basic and acidic residues over residues 740–802 (EDGK…EHLN), 912–928 (KAGDDASKKTKEGKKPD), 977–1004 (VVEKDKDKTPEKATEGEKEAEKDAEKLP), and 1018–1027 (KTPEKPKTPE). Basic residues predominate over residues 1812 to 1824 (TSHKTKDVKRKSA). A required for nuclear localization region spans residues 2409–3902 (QTTRLDKVAK…MGQFPNQQQY (1494 aa)). Residues 2474-2547 (AAVKKPEEET…VTAKDTEKDT (74 aa)) show a composition bias toward basic and acidic residues. Residues 2480–2526 (EEETAEKKKDEAKKADEKTTKADDEKKKDETADAKKDNEKQKEEKDK) are a coiled coil. 3 stretches are compositionally biased toward low complexity: residues 2548 to 2566 (AAPTDAAKAAAAPVAAAPD), 2614 to 2632 (SRANANAETAAAAETSSTT), and 2734 to 2748 (PHPGMQHQSGMQHQG). A compositionally biased stretch (basic and acidic residues) spans 2876–2979 (RIMEEQRILR…ERLERERVAR (104 aa)). 4 stretches are compositionally biased toward low complexity: residues 2980–3001 (EALAAQQAQQAQQAQQAQQAQQ), 3010–3143 (QQQR…QRNP), 3196–3205 (QAGQAAGQQQ), and 3226–3236 (PQQQQQQPQQP). Polar residues predominate over residues 3237–3248 (GTSQIPNTTPTR). Composition is skewed to low complexity over residues 3250 to 3275 (ANPMQGQQQQAGMQNYQNQPVLGQPG), 3284 to 3295 (GQQQQNQFQRQG), and 3317 to 3389 (GQQQ…FGRQ). The segment covering 3391–3409 (APNQENFQQQPGFNQNAAG) has biased composition (polar residues). Composition is skewed to low complexity over residues 3410–3446 (QNYQRPEQQQQSQNQWNQLNQQMRPQQPQQPSQQQQN), 3454–3539 (QSQQ…QGNQ), and 3570–3619 (SSGN…RPGM). Residues 3620-3649 (GQQGMGQQGMGQQGGMGQSGRGQPGMGGQS) show a composition bias toward gly residues. 3 stretches are compositionally biased toward low complexity: residues 3663–3700 (MGQPGMQQSGMQQQHGMQQQQPGAQQSGLQQAGMQQQH), 3710–3742 (QQGRNNYGSMGQQGQQSGQQQAQQHQQMSQQAQ), and 3760–3830 (QQQQ…HRGQ). Positions 3831-3841 (GQQGHGMGGAG) are enriched in gly residues. The span at 3842-3888 (QQHQQVPQQQQNQYFQPQQQQDQRMQQQPGGQQQQQQGQSGQQQNNQ) shows a compositional bias: low complexity. Polar residues predominate over residues 3889-3902 (HYNNMGQFPNQQQY).

This sequence belongs to the Mediator complex subunit 12 family. In terms of assembly, component of the Mediator complex.

The protein resides in the nucleus. Functionally, component of the Mediator complex, a coactivator involved in regulated gene transcription of nearly all RNA polymerase II-dependent genes. Mediator functions as a bridge to convey information from gene-specific regulatory proteins to the basal RNA polymerase II transcription machinery. Mediator is recruited to promoters by direct interactions with regulatory proteins and serves as a scaffold for the assembly of a functional preinitiation complex with RNA polymerase II and the general transcription factors. The chain is Mediator of RNA polymerase II transcription subunit 12 (dpy-22) from Caenorhabditis briggsae.